The primary structure comprises 302 residues: MTVCAKKHVHLTRDAAEQLLADIDRRLDQLLPVEGERDVVGAAMREGALAPGKRIRPMLLLLTARDLGCAVSHDGLLDLACAVEMVHAASLILDDMPCMDDAKLRRGRPTIHSHYGEHVAILAAVALLSKAFGVIADADGLTPLAKNRAVSELSNAIGMQGLVQGQFKDLSEGDKPRSAEAILMTNHFKTSTLFCASMQMASIVANASSEARDCLHRFSLDLGQAFQLLDDLTDGMTDTGKDSNQDAGKSTLVNLLGPRAVEERLRQHLQLASEHLSAACQHGHATQHFIQAWFDKKLAAVS.

Isopentenyl diphosphate-binding residues include Lys53, Arg56, and His87. Mg(2+) is bound by residues Asp94 and Asp100. Position 105 (Arg105) interacts with (2E,6E)-farnesyl diphosphate. Arg106 lines the isopentenyl diphosphate pocket. Residues Lys189, Thr190, and Gln227 each coordinate (2E,6E)-farnesyl diphosphate.

It belongs to the FPP/GGPP synthase family. It depends on Mg(2+) as a cofactor.

The enzyme catalyses isopentenyl diphosphate + (2E,6E)-farnesyl diphosphate = (2E,6E,10E)-geranylgeranyl diphosphate + diphosphate. It participates in isoprenoid biosynthesis; geranylgeranyl diphosphate biosynthesis; geranylgeranyl diphosphate from farnesyl diphosphate and isopentenyl diphosphate: step 1/1. Its function is as follows. Catalyzes the condensation of farnesyl diphosphate (FPP) and isopentenyl diphosphate (IPP) to yield geranylgeranyl diphosphate (GGPP) needed for biosynthesis of carotenoids and diterpenes. This Pantoea ananas (Erwinia uredovora) protein is Geranylgeranyl diphosphate synthase (crtE).